The primary structure comprises 196 residues: Pyridoxal 5'-phosphate synthase subunit PdxT (196 aa).

Position 47 to 49 (47 to 49 (GES)) interacts with L-glutamine. The active-site Nucleophile is cysteine 79. L-glutamine-binding positions include arginine 106 and 134-135 (IR). Catalysis depends on charge relay system residues histidine 170 and glutamate 172.

This sequence belongs to the glutaminase PdxT/SNO family. In terms of assembly, in the presence of PdxS, forms a dodecamer of heterodimers. Only shows activity in the heterodimer.

It carries out the reaction aldehydo-D-ribose 5-phosphate + D-glyceraldehyde 3-phosphate + L-glutamine = pyridoxal 5'-phosphate + L-glutamate + phosphate + 3 H2O + H(+). It catalyses the reaction L-glutamine + H2O = L-glutamate + NH4(+). The protein operates within cofactor biosynthesis; pyridoxal 5'-phosphate biosynthesis. Catalyzes the hydrolysis of glutamine to glutamate and ammonia as part of the biosynthesis of pyridoxal 5'-phosphate. The resulting ammonia molecule is channeled to the active site of PdxS. This is Pyridoxal 5'-phosphate synthase subunit PdxT from Bacillus cereus (strain B4264).